Here is a 154-residue protein sequence, read N- to C-terminus: Myoglobin (154 aa).

In terms of domain architecture, Globin spans 2–148; that stretch reads GLSDGEWQLV…FRNDMAAKYK (147 aa). Residue Ser-4 is modified to Phosphoserine. A nitrite-binding site is contributed by His-65. His-65 serves as a coordination point for O2. Thr-68 is subject to Phosphothreonine. His-94 contacts heme b.

The protein belongs to the globin family. As to quaternary structure, monomeric.

The protein resides in the cytoplasm. Its subcellular location is the sarcoplasm. It catalyses the reaction Fe(III)-heme b-[protein] + nitric oxide + H2O = Fe(II)-heme b-[protein] + nitrite + 2 H(+). It carries out the reaction H2O2 + AH2 = A + 2 H2O. Functionally, monomeric heme protein which primary function is to store oxygen and facilitate its diffusion within muscle tissues. Reversibly binds oxygen through a pentacoordinated heme iron and enables its timely and efficient release as needed during periods of heightened demand. Depending on the oxidative conditions of tissues and cells, and in addition to its ability to bind oxygen, it also has a nitrite reductase activity whereby it regulates the production of bioactive nitric oxide. Under stress conditions, like hypoxia and anoxia, it also protects cells against reactive oxygen species thanks to its pseudoperoxidase activity. In Ochotona curzoniae (Black-lipped pika), this protein is Myoglobin (MB).